The chain runs to 206 residues: MTKRTSAKYKIDRRMGENIWGRPKSPVNRREYGPGQHGQRRKGKLSDFGIQLRAKQKLKGYYGDLTEKQFRRIYGEAERVKGDTGENLIGLLERRLDAVVYRAKFVPTVFAARQFVNHGHVLVNGKRVNIPSYRVKEGDVIEVREKSKQNVAVLEAVQLAERDVPDYIEVDHSKLTATFVRAPGLADVPYPVVMEPNLVVEFYAKN.

The interval 18–46 (NIWGRPKSPVNRREYGPGQHGQRRKGKLS) is disordered. An S4 RNA-binding domain is found at 94–156 (RRLDAVVYRA…SKQNVAVLEA (63 aa)).

It belongs to the universal ribosomal protein uS4 family. In terms of assembly, part of the 30S ribosomal subunit. Contacts protein S5. The interaction surface between S4 and S5 is involved in control of translational fidelity.

Its function is as follows. One of the primary rRNA binding proteins, it binds directly to 16S rRNA where it nucleates assembly of the body of the 30S subunit. In terms of biological role, with S5 and S12 plays an important role in translational accuracy. The sequence is that of Small ribosomal subunit protein uS4 from Ruegeria sp. (strain TM1040) (Silicibacter sp.).